The following is a 414-amino-acid chain: Secernin-1 (414 aa).

This sequence belongs to the peptidase C69 family. Secernin subfamily.

The protein localises to the cytoplasm. In terms of biological role, regulates exocytosis in mast cells. Increases both the extent of secretion and the sensitivity of mast cells to stimulation with calcium. This Mus musculus (Mouse) protein is Secernin-1 (Scrn1).